The sequence spans 1195 residues: ATP-dependent DNA helicase Hel308 (1195 aa).

ATP contacts are provided by residues Gln-20 and 39 to 46; that span reads IPTASGKT. A Helicase ATP-binding domain is found at 26 to 196; it reads RGLLDKNKNF…WLNAELIVDD (171 aa). Residues 143 to 146 carry the DEAH box motif; that stretch reads DEIH. The 134-residue stretch at 451–584 folds into the DOD-type homing endonuclease domain; sequence FIGYFIGDGY…LQFVLLRFGI (134 aa).

This sequence belongs to the helicase family. Hel308 subfamily. Monomer. This protein undergoes a protein self splicing that involves a post-translational excision of the intervening region (intein) followed by peptide ligation.

The enzyme catalyses Couples ATP hydrolysis with the unwinding of duplex DNA by translocating in the 3'-5' direction.. The catalysed reaction is ATP + H2O = ADP + phosphate + H(+). DNA-dependent ATPase and 3'-5' DNA helicase that may be involved in repair of stalled replication forks. The protein is ATP-dependent DNA helicase Hel308 of Methanocaldococcus jannaschii (strain ATCC 43067 / DSM 2661 / JAL-1 / JCM 10045 / NBRC 100440) (Methanococcus jannaschii).